The sequence spans 241 residues: Pyridoxine 5'-phosphate synthase (241 aa).

Asn-10 contacts 3-amino-2-oxopropyl phosphate. 12 to 13 is a binding site for 1-deoxy-D-xylulose 5-phosphate; that stretch reads DH. Arg-21 contributes to the 3-amino-2-oxopropyl phosphate binding site. The active-site Proton acceptor is the His-48. 1-deoxy-D-xylulose 5-phosphate contacts are provided by Arg-50 and His-55. Glu-75 acts as the Proton acceptor in catalysis. Residue Thr-105 participates in 1-deoxy-D-xylulose 5-phosphate binding. His-195 serves as the catalytic Proton donor. 3-amino-2-oxopropyl phosphate-binding positions include Gly-196 and 217–218; that span reads GH.

Belongs to the PNP synthase family. Homooctamer; tetramer of dimers.

The protein resides in the cytoplasm. It catalyses the reaction 3-amino-2-oxopropyl phosphate + 1-deoxy-D-xylulose 5-phosphate = pyridoxine 5'-phosphate + phosphate + 2 H2O + H(+). The protein operates within cofactor biosynthesis; pyridoxine 5'-phosphate biosynthesis; pyridoxine 5'-phosphate from D-erythrose 4-phosphate: step 5/5. Functionally, catalyzes the complicated ring closure reaction between the two acyclic compounds 1-deoxy-D-xylulose-5-phosphate (DXP) and 3-amino-2-oxopropyl phosphate (1-amino-acetone-3-phosphate or AAP) to form pyridoxine 5'-phosphate (PNP) and inorganic phosphate. The chain is Pyridoxine 5'-phosphate synthase from Bdellovibrio bacteriovorus (strain ATCC 15356 / DSM 50701 / NCIMB 9529 / HD100).